A 354-amino-acid polypeptide reads, in one-letter code: UDP-N-acetylglucosamine--N-acetylmuramyl-(pentapeptide) pyrophosphoryl-undecaprenol N-acetylglucosamine transferase (354 aa).

UDP-N-acetyl-alpha-D-glucosamine is bound by residues 15-17 (TGG), Asn-127, Arg-163, Ser-191, Ile-244, 263-268 (ALTVSE), and Gln-288.

The protein belongs to the glycosyltransferase 28 family. MurG subfamily.

The protein resides in the cell inner membrane. The enzyme catalyses di-trans,octa-cis-undecaprenyl diphospho-N-acetyl-alpha-D-muramoyl-L-alanyl-D-glutamyl-meso-2,6-diaminopimeloyl-D-alanyl-D-alanine + UDP-N-acetyl-alpha-D-glucosamine = di-trans,octa-cis-undecaprenyl diphospho-[N-acetyl-alpha-D-glucosaminyl-(1-&gt;4)]-N-acetyl-alpha-D-muramoyl-L-alanyl-D-glutamyl-meso-2,6-diaminopimeloyl-D-alanyl-D-alanine + UDP + H(+). It participates in cell wall biogenesis; peptidoglycan biosynthesis. Cell wall formation. Catalyzes the transfer of a GlcNAc subunit on undecaprenyl-pyrophosphoryl-MurNAc-pentapeptide (lipid intermediate I) to form undecaprenyl-pyrophosphoryl-MurNAc-(pentapeptide)GlcNAc (lipid intermediate II). The chain is UDP-N-acetylglucosamine--N-acetylmuramyl-(pentapeptide) pyrophosphoryl-undecaprenol N-acetylglucosamine transferase from Vibrio cholerae serotype O1 (strain ATCC 39315 / El Tor Inaba N16961).